Reading from the N-terminus, the 501-residue chain is Aspartate--tRNA ligase, cytoplasmic (501 aa).

Thr-52 carries the phosphothreonine modification. Lys-74 carries the N6-acetyllysine modification. Glu-229 is a binding site for L-aspartate. Position 249 is a phosphoserine (Ser-249). The aspartate stretch occupies residues 251 to 254 (QLYK). Residue Arg-273 participates in L-aspartate binding. ATP-binding positions include 273 to 275 (RAE) and 281 to 283 (RHL). Residue Lys-374 is modified to N6-acetyllysine. Positions 411–415 (KQSNS) are binding site for the 3'-end of tRNA. Glu-424 contacts ATP. 2 residues coordinate L-aspartate: Ser-427 and Arg-431. 472–475 (GLER) is a binding site for ATP. Thr-500 carries the phosphothreonine; by PKA modification.

This sequence belongs to the class-II aminoacyl-tRNA synthetase family. Type 2 subfamily. In terms of assembly, homodimer. Part of a multisubunit complex that groups tRNA ligases for Arg (RARS1), Asp (DARS1), Gln (QARS1), Ile (IARS1), Leu (LARS1), Lys (KARS1), Met (MARS1) the bifunctional ligase for Glu and Pro (EPRS1) and the auxiliary subunits AIMP1/p43, AIMP2/p38 and EEF1E1/p18. Expression in the developing and adult brain shows similar patterns. Highly expressed in the ventricular and subventricular zones, including hippocampal subfields, the midlateral temporal cortex and the frontal polar cortex. The cerebellum, cerebral cortex, hippocampus, and lateral ventricle show preferential neuronal expression. Expression in the peripheral neurons is evident in the colon.

The protein resides in the cytoplasm. Its subcellular location is the cytosol. It carries out the reaction tRNA(Asp) + L-aspartate + ATP = L-aspartyl-tRNA(Asp) + AMP + diphosphate. Catalyzes the specific attachment of an amino acid to its cognate tRNA in a 2 step reaction: the amino acid (AA) is first activated by ATP to form AA-AMP and then transferred to the acceptor end of the tRNA. This chain is Aspartate--tRNA ligase, cytoplasmic, found in Homo sapiens (Human).